Here is a 482-residue protein sequence, read N- to C-terminus: Catalase (482 aa).

The segment covering 1 to 23 has biased composition (polar residues); that stretch reads MSQNKTLTTASGPPVADNQNSRS. The tract at residues 1–28 is disordered; that stretch reads MSQNKTLTTASGPPVADNQNSRSAGPRG. Catalysis depends on residues H55 and N128. Residue Y338 participates in heme binding. Residues 370–395 are disordered; the sequence is SMAFGSNGGAAPNYEPNSYADAPKQA.

Belongs to the catalase family. It depends on heme as a cofactor.

The enzyme catalyses 2 H2O2 = O2 + 2 H2O. Functionally, decomposes hydrogen peroxide into water and oxygen; serves to protect cells from the toxic effects of hydrogen peroxide. The sequence is that of Catalase (cat) from Onchocerca volvulus endobacterium.